Reading from the N-terminus, the 413-residue chain is Branched-chain-amino-acid aminotransferase 3, chloroplastic (413 aa).

A chloroplast-targeting transit peptide spans 1–60 (MERAAILPSVNQNYLLCPSRAFSTRLHSSTRNLSPPSFASIKLQHSSSSVSSNGGISLTR). Lys-259 carries the post-translational modification N6-(pyridoxal phosphate)lysine.

The protein belongs to the class-IV pyridoxal-phosphate-dependent aminotransferase family. It depends on pyridoxal 5'-phosphate as a cofactor. As to expression, expressed in the phloem cells.

The protein localises to the plastid. The protein resides in the chloroplast. It catalyses the reaction L-leucine + 2-oxoglutarate = 4-methyl-2-oxopentanoate + L-glutamate. The enzyme catalyses L-isoleucine + 2-oxoglutarate = (S)-3-methyl-2-oxopentanoate + L-glutamate. It carries out the reaction L-valine + 2-oxoglutarate = 3-methyl-2-oxobutanoate + L-glutamate. The catalysed reaction is a 2-oxocarboxylate + L-methionine = 4-methylsulfanyl-2-oxobutanoate + an L-alpha-amino acid. Its pathway is amino-acid biosynthesis; L-isoleucine biosynthesis; L-isoleucine from 2-oxobutanoate: step 4/4. The protein operates within amino-acid biosynthesis; L-leucine biosynthesis; L-leucine from 3-methyl-2-oxobutanoate: step 4/4. It functions in the pathway amino-acid biosynthesis; L-valine biosynthesis; L-valine from pyruvate: step 4/4. Inhibited by Ser- or Thr-derived imine. Its function is as follows. Converts 2-oxo acids to branched-chain amino acids. Acts on leucine, isoleucine and valine. Also involved in methionine chain elongation cycle of aliphatic glucosinolate formation. Catalyzes the conversion of 5-methylthiopentyl-2-oxo and 6-methylthiohexyl-2-oxo acids to their respective Met derivatives, homomethionine and dihomo-methionine, respectively. The chain is Branched-chain-amino-acid aminotransferase 3, chloroplastic from Arabidopsis thaliana (Mouse-ear cress).